The following is a 65-amino-acid chain: Small ribosomal subunit protein bS21 (65 aa).

It belongs to the bacterial ribosomal protein bS21 family.

The sequence is that of Small ribosomal subunit protein bS21 from Chlorobium limicola (strain DSM 245 / NBRC 103803 / 6330).